A 694-amino-acid polypeptide reads, in one-letter code: MSVSYFQERGTPASGDVLSPATTSLGGASRGANALSSRITSVLSASYADLEIRDALETLDTRGVRNTAETRRQIRLDVQKEVIECNGEIVKDFGQVAEQLKRIGTAISSLNSYCADMRSHIAAANKETGPVLEEATGLINQRKQVESKQQILQAFNSHFLISDEEATVLTSTAEPVNEEFFQVLTRVKKIHHDCQVLLGTEDQRLGLEILEQSSKQLNAAFQKLYRWIQREFKTLDLENPQISASVRRSLRVLAERPTLFQSCLDSFAEARESILSDSFHSALTGSASDAEHIATKPIEFQAHDPLRYVGDMLAWVHSTTVSEREALENLFISDGDEIKRSIQEGLESEPWLKDEEAEIFDGRKALSQLVGRDLASVARVLRQRTEQVVQSHDDATLAYKIANLIGFYKGMFAKLLGTDSDVLEVFTTLEASAMRQFRANMRDYVAAVQSDIAVPPQDLSPPDFLDDALQTLKVLAKSYDTSSAGAEDQEQGFQAVLAEALDPFMSGCVNLQKGLQQPDSAVFAINCLFAAKDVLSAFTFASERVEEMEDTISEQVAQLVDYQHEYLLHESGLATLLEALEPITDDEESLKTIPELEPFKRDALVAASQQLDEFLPSALIDAAENLKRLKNRKMIQDITEEAAASFCEDFEVVESKIIAADDLTYDEDKEDEEQEPGLRDLFPRTSGEIRVLLS.

Positions 1–20 (MSVSYFQERGTPASGDVLSP) are disordered.

This sequence belongs to the COG6 family.

It is found in the golgi apparatus membrane. Acts as a component of the peripheral membrane COG complex that is involved in intra-Golgi protein trafficking. COG is located at the cis-Golgi, and regulates tethering of retrograde intra-Golgi vesicles and possibly a number of other membrane trafficking events. The sequence is that of Conserved oligomeric Golgi complex subunit 6 (COG6) from Phaeosphaeria nodorum (strain SN15 / ATCC MYA-4574 / FGSC 10173) (Glume blotch fungus).